Here is a 228-residue protein sequence, read N- to C-terminus: MERMNDNVLTLQMLCAEQGMEIDLPTLQQLARYGDCLERWNHKINLISRKEDAPVIIKHIFHSLLITLYHSFREGEDVLDLGTGGGLPGIPLSLLFPRTRFLLVDATGKKIAACQAMITELGINNAIALHTRVEELKGVVFDTVLSRQVAPLDKLCSYSAPLLKAGGTLICLKGGNLENEIAAAMKSNKGQEGFPSKVELHPIHGISPFFSEKQIVIVHGKNSSANND.

S-adenosyl-L-methionine contacts are provided by residues G82, L87, 105–107, 133–134, and R147; these read DAT and VE.

Belongs to the methyltransferase superfamily. RNA methyltransferase RsmG family.

The protein localises to the cytoplasm. Its function is as follows. Specifically methylates the N7 position of a guanine in 16S rRNA. The sequence is that of Ribosomal RNA small subunit methyltransferase G from Pelodictyon phaeoclathratiforme (strain DSM 5477 / BU-1).